Reading from the N-terminus, the 173-residue chain is Bursicon (173 aa).

An N-terminal signal peptide occupies residues 1–32; that stretch reads MLRHLLRHENNKVFVLILLYCVLVSILKLCTA. 5 disulfide bridges follow: Cys52–Cys101, Cys66–Cys115, Cys76–Cys136, Cys80–Cys138, and Cys98–Cys141. Residues 52-142 enclose the CTCK domain; that stretch reads CQVTPVIHVL…PLECMCRPCT (91 aa).

In terms of assembly, heterodimer of Burs and Pburs. In terms of tissue distribution, expressed in one to two pairs of neurons in each of the thoracic and abdominal neuromeres of the larval CNS. Coexpressed with CCAP in most CCAP-specific neurons. Coexpressed with Pburs in four bilateral neurons in thoracic and abdominal neuromeres of the ventral nervous system.

The protein resides in the secreted. Its function is as follows. Final heterodimeric neurohormone released at the end of the molting cycle, involved in the sclerotization (tanning) of the insect cuticle, melanization and wing spreading. Heterodimer specifically activates the G protein-coupled receptor rk. The polypeptide is Bursicon (Drosophila melanogaster (Fruit fly)).